A 354-amino-acid chain; its full sequence is Ion-translocating oxidoreductase complex subunit D (354 aa).

The next 4 helical transmembrane spans lie at 19–39 (IMLL…YYFG), 40–60 (FGVL…EFLV), 77–99 (AAVT…LSFF), and 119–139 (IFNP…ILMT). An FMN phosphoryl threonine modification is found at T187. 5 helical membrane-spanning segments follow: residues 221–241 (WISI…FNVI), 245–265 (IPVS…YFFK), 268–288 (MYYP…FFIA), 295–315 (SITK…IWLI), and 319–339 (GNYP…VPLI).

The protein belongs to the NqrB/RnfD family. In terms of assembly, the complex is composed of six subunits: RnfA, RnfB, RnfC, RnfD, RnfE and RnfG. FMN serves as cofactor.

It is found in the cell inner membrane. In terms of biological role, part of a membrane-bound complex that couples electron transfer with translocation of ions across the membrane. The protein is Ion-translocating oxidoreductase complex subunit D of Buchnera aphidicola subsp. Baizongia pistaciae (strain Bp).